Here is a 162-residue protein sequence, read N- to C-terminus: MALNLQDKKAIVAEVNEAAAGALSAVVADSRGVSVDAMTTLRKQAREAGVYMKVVRNTLARRAVEGTQYECLTDTFTGPSLIAFSNEHPGAAARLFKDFAKENKKFEIKAAAFEGALTDAEVLATLPTYDEAIARLMMCLKEASAGKLVRTIAAIRDQKEAA.

Belongs to the universal ribosomal protein uL10 family. Part of the ribosomal stalk of the 50S ribosomal subunit. The N-terminus interacts with L11 and the large rRNA to form the base of the stalk. The C-terminus forms an elongated spine to which L12 dimers bind in a sequential fashion forming a multimeric L10(L12)X complex.

Forms part of the ribosomal stalk, playing a central role in the interaction of the ribosome with GTP-bound translation factors. In Vibrio vulnificus (strain CMCP6), this protein is Large ribosomal subunit protein uL10.